The following is a 443-amino-acid chain: ATP-dependent protease ATPase subunit HslU (443 aa).

Residues Ile18, 60–65, Asp256, Glu321, and Arg393 contribute to the ATP site; that span reads GVGKTE.

It belongs to the ClpX chaperone family. HslU subfamily. In terms of assembly, a double ring-shaped homohexamer of HslV is capped on each side by a ring-shaped HslU homohexamer. The assembly of the HslU/HslV complex is dependent on binding of ATP.

Its subcellular location is the cytoplasm. ATPase subunit of a proteasome-like degradation complex; this subunit has chaperone activity. The binding of ATP and its subsequent hydrolysis by HslU are essential for unfolding of protein substrates subsequently hydrolyzed by HslV. HslU recognizes the N-terminal part of its protein substrates and unfolds these before they are guided to HslV for hydrolysis. The chain is ATP-dependent protease ATPase subunit HslU from Escherichia fergusonii (strain ATCC 35469 / DSM 13698 / CCUG 18766 / IAM 14443 / JCM 21226 / LMG 7866 / NBRC 102419 / NCTC 12128 / CDC 0568-73).